A 519-amino-acid chain; its full sequence is Cytosol aminopeptidase (519 aa).

K45 carries the N6-succinyllysine modification. Phosphoserine is present on S54. K61 and K103 each carry N6-succinyllysine. Phosphoserine occurs at positions 180 and 194. 2 residues coordinate Zn(2+): L202 and M203. Position 221 is an N6-acetyllysine; alternate (K221). K221 carries the N6-succinyllysine; alternate modification. S238 carries the post-translational modification Phosphoserine. Zn(2+) is bound by residues K282 and D287. The substrate site is built by K282, D287, S292, and K294. D287 contributes to the Mg(2+) binding site. K294 is a catalytic residue. Residues R303, D305, D364, and E366 each coordinate Zn(2+). Substrate contacts are provided by D305 and D364. Residues D364 and E366 each coordinate Mg(2+). Residue R368 is part of the active site. K455 bears the N6-acetyllysine; alternate mark. At K455 the chain carries N6-succinyllysine; alternate. K476 carries the N6-succinyllysine modification. K489 is subject to N6-acetyllysine; alternate. Position 489 is an N6-succinyllysine; alternate (K489).

The protein belongs to the peptidase M17 family. Homohexamer. Requires Zn(2+) as cofactor. The cofactor is Mn(2+).

Its subcellular location is the cytoplasm. It carries out the reaction Release of an N-terminal amino acid, Xaa-|-Yaa-, in which Xaa is preferably Leu, but may be other amino acids including Pro although not Arg or Lys, and Yaa may be Pro. Amino acid amides and methyl esters are also readily hydrolyzed, but rates on arylamides are exceedingly low.. The enzyme catalyses an S-substituted L-cysteinylglycine + H2O = an S-substituted L-cysteine + glycine. The catalysed reaction is L-cysteinylglycine + H2O = L-cysteine + glycine. It catalyses the reaction S-benzyl-L-cysteinylglycine + H2O = S-benzyl-L-cysteine + glycine. It carries out the reaction Release of N-terminal proline from a peptide.. Functionally, cytosolic metallopeptidase that catalyzes the removal of unsubstituted N-terminal hydrophobic amino acids from various peptides. The presence of Zn(2+) ions is essential for the peptidase activity, and the association with other cofactors can modulate the substrate spectificity of the enzyme. For instance, in the presence of Mn(2+), it displays a specific Cys-Gly hydrolyzing activity of Cys-Gly-S-conjugates. Involved in the metabolism of glutathione and in the degradation of glutathione S-conjugates, which may play a role in the control of the cell redox status. This chain is Cytosol aminopeptidase, found in Mus musculus (Mouse).